Consider the following 359-residue polypeptide: DNA replication and repair protein RecF (359 aa).

30 to 37 (GPNGSGKT) is an ATP binding site.

It belongs to the RecF family.

It is found in the cytoplasm. Its function is as follows. The RecF protein is involved in DNA metabolism; it is required for DNA replication and normal SOS inducibility. RecF binds preferentially to single-stranded, linear DNA. It also seems to bind ATP. The sequence is that of DNA replication and repair protein RecF from Psychromonas ingrahamii (strain DSM 17664 / CCUG 51855 / 37).